The sequence spans 85 residues: Small ribosomal subunit protein bS20 (85 aa).

The protein belongs to the bacterial ribosomal protein bS20 family.

Binds directly to 16S ribosomal RNA. This Borrelia turicatae (strain 91E135) protein is Small ribosomal subunit protein bS20.